Consider the following 458-residue polypeptide: Elongation factor 1-alpha (458 aa).

A N,N,N-trimethylglycine modification is found at glycine 2. Position 3 is an N6,N6-dimethyllysine; alternate (lysine 3). Residue lysine 3 is modified to N6-methyllysine; alternate. Residues 5 to 240 (KTHVNVVVIG…DAIEPPVRPS (236 aa)) enclose the tr-type G domain. The segment at 14-21 (GHVDSGKS) is G1. 14–21 (GHVDSGKS) provides a ligand contact to GTP. Residue lysine 30 is modified to N6-methyllysine. The segment at 70 to 74 (GITID) is G2. Lysine 79 is subject to N6,N6,N6-trimethyllysine. Residues 91-94 (DAPG) are G3. Residues 91–95 (DAPGH) and 153–156 (NKMD) each bind GTP. A G4 region spans residues 153 to 156 (NKMD). The segment at 192–194 (SGW) is G5. Lysine 316 carries the post-translational modification N6,N6-dimethyllysine; alternate. An N6-methyllysine; alternate modification is found at lysine 316. Lysine 390 is subject to N6-methyllysine.

Belongs to the TRAFAC class translation factor GTPase superfamily. Classic translation factor GTPase family. EF-Tu/EF-1A subfamily.

Its subcellular location is the cytoplasm. In terms of biological role, this protein promotes the GTP-dependent binding of aminoacyl-tRNA to the A-site of ribosomes during protein biosynthesis. This Mucor circinelloides f. lusitanicus (Mucor racemosus var. lusitanicus) protein is Elongation factor 1-alpha (TEF-1).